Consider the following 191-residue polypeptide: Peptidyl-tRNA hydrolase (191 aa).

TRNA is bound at residue Y17. Residue H22 is the Proton acceptor of the active site. TRNA contacts are provided by Y68, N70, and N116.

The protein belongs to the PTH family. Monomer.

It is found in the cytoplasm. The catalysed reaction is an N-acyl-L-alpha-aminoacyl-tRNA + H2O = an N-acyl-L-amino acid + a tRNA + H(+). Functionally, hydrolyzes ribosome-free peptidyl-tRNAs (with 1 or more amino acids incorporated), which drop off the ribosome during protein synthesis, or as a result of ribosome stalling. Its function is as follows. Catalyzes the release of premature peptidyl moieties from peptidyl-tRNA molecules trapped in stalled 50S ribosomal subunits, and thus maintains levels of free tRNAs and 50S ribosomes. The chain is Peptidyl-tRNA hydrolase from Mycobacterium ulcerans (strain Agy99).